Reading from the N-terminus, the 255-residue chain is (R)-S-adenosyl-L-methionine hydrolase (255 aa).

D9, D70, and N186 together coordinate adenosine. (R)-S-adenosyl-L-methionine is bound by residues N186, S227, E232, and V235. V235 is an adenosine binding site.

The protein belongs to the SAM hydrolase / SAM-dependent halogenase family. Homotrimer.

It catalyses the reaction (R)-S-adenosyl-L-methionine + H2O = adenosine + L-methionine + H(+). Catalyzes the hydrolysis of S-adenosyl-L-methionine (SAM) into adenosine and L-methionine. Does not have chlorinase or fluorinase activity. In Thermus thermophilus (strain ATCC 27634 / DSM 579 / HB8), this protein is (R)-S-adenosyl-L-methionine hydrolase.